The primary structure comprises 450 residues: MRQILHIQGGQCGNQIGAKFWEVVCAEHGIDPTGRYTGDSDLQLERIDVYYNEASGGRFVPRAVLMDLEPGTMDSIRSGPYGQIFRPDNFVFGQSGAGNNWAKGHYTEGAELIDSVLDVVRKEAENCDCLQGFQVCHSLGGGTGSGMGTLLISKIREEYPDRMMLTFSVFPSPKVSDTVVEPYNATLSVHQLVENADEVMVLDNEALYDICFRILKLSNPSFGDLNHLISATMSGVTCCLRFPGQLNSDLRKLAVNLIPFPRLHFFMVGFAPLTSRGSQQYRTLSVPELTQQMWDAKNMMCAADPRHGRYLTASAMFRGKMSTKEVDEQMMNVQNKNSSYFVEWIPNNVKSTVCDIPPTGLKMASTFIGNSTSIQEMFRRVSEQFTAMFRRKAFLHWYTGEGMDEMEFTEAESNMNDLVAEYQQYQDATADEDEYGEEEGDEEEYGQHDI.

GTP is bound by residues Gln11, Glu69, Ser138, Gly142, Thr143, Gly144, Asn204, and Asn226. Glu69 lines the Mg(2+) pocket. Residues 426–450 (QDATADEDEYGEEEGDEEEYGQHDI) are disordered. A compositionally biased stretch (acidic residues) spans 429–444 (TADEDEYGEEEGDEEE).

This sequence belongs to the tubulin family. As to quaternary structure, dimer of alpha and beta chains. A typical microtubule is a hollow water-filled tube with an outer diameter of 25 nm and an inner diameter of 15 nM. Alpha-beta heterodimers associate head-to-tail to form protofilaments running lengthwise along the microtubule wall with the beta-tubulin subunit facing the microtubule plus end conferring a structural polarity. Microtubules usually have 13 protofilaments but different protofilament numbers can be found in some organisms and specialized cells. Mg(2+) serves as cofactor.

Its subcellular location is the cytoplasm. The protein localises to the cytoskeleton. Tubulin is the major constituent of microtubules, a cylinder consisting of laterally associated linear protofilaments composed of alpha- and beta-tubulin heterodimers. Microtubules grow by the addition of GTP-tubulin dimers to the microtubule end, where a stabilizing cap forms. Below the cap, tubulin dimers are in GDP-bound state, owing to GTPase activity of alpha-tubulin. In Pisum sativum (Garden pea), this protein is Tubulin beta-1 chain (TUBB1).